Reading from the N-terminus, the 149-residue chain is Large ribosomal subunit protein eL8 (149 aa).

The protein belongs to the eukaryotic ribosomal protein eL8 family. Part of the 50S ribosomal subunit. Probably part of the RNase P complex.

It localises to the cytoplasm. Multifunctional RNA-binding protein that recognizes the K-turn motif in ribosomal RNA, the RNA component of RNase P, box H/ACA, box C/D and box C'/D' sRNAs. The sequence is that of Large ribosomal subunit protein eL8 from Pyrobaculum calidifontis (strain DSM 21063 / JCM 11548 / VA1).